We begin with the raw amino-acid sequence, 300 residues long: Protoheme IX farnesyltransferase (300 aa).

Transmembrane regions (helical) follow at residues 24-44, 48-68, 94-114, 118-138, 146-166, 172-192, 217-237, 239-259, and 278-298; these read VTQLAVFCAVIGMFLATPGMV, VLIGGTVGIWLLAGAAFAINC, PQILLFSAVLGSIGAWTLYTF, LTMWLTIATFVGYAVIYTLLL, IVIGGASGAMPPALGWAAVTG, AWILVLIIFVWTPPHFWVLAL, LHILLYTVILFAVTLMPFISG, SGAVYLTSAVLLGAVFLAYAW, and IVYLSLLFAALLVDHYARPLL.

The protein belongs to the UbiA prenyltransferase family. Protoheme IX farnesyltransferase subfamily.

Its subcellular location is the cell inner membrane. The enzyme catalyses heme b + (2E,6E)-farnesyl diphosphate + H2O = Fe(II)-heme o + diphosphate. It participates in porphyrin-containing compound metabolism; heme O biosynthesis; heme O from protoheme: step 1/1. Functionally, converts heme B (protoheme IX) to heme O by substitution of the vinyl group on carbon 2 of heme B porphyrin ring with a hydroxyethyl farnesyl side group. In Burkholderia vietnamiensis (strain G4 / LMG 22486) (Burkholderia cepacia (strain R1808)), this protein is Protoheme IX farnesyltransferase.